Here is a 557-residue protein sequence, read N- to C-terminus: Acetylcholine receptor subunit alpha-L1 (557 aa).

Positions 1–23 (MAAALPPMLLLLLLLLLHHPAAA) are cleaved as a signal peptide. Residues 24 to 244 (NPDAKRLYDD…NITLRRKTLF (221 aa)) are Extracellular-facing. N-linked (GlcNAc...) asparagine glycosylation is present at Asn47. Intrachain disulfides connect Cys151-Cys165 and Cys224-Cys225. Asn235 carries N-linked (GlcNAc...) asparagine glycosylation. Transmembrane regions (helical) follow at residues 245–266 (YTVNLIVPCVGISYLSVLVFYL), 274–294 (IALCISILLSQTMFFLLISEI), and 308–329 (YLLFTMVLVGLSVVITIMVLNV). The Cytoplasmic portion of the chain corresponds to 330–500 (HYRKPSTHKM…EFDAEDQDWG (171 aa)). Residues 501–523 (FVAMVLDRLFLWIFTIASIVGTF) traverse the membrane as a helical segment.

Belongs to the ligand-gated ion channel (TC 1.A.9) family. Acetylcholine receptor (TC 1.A.9.1) subfamily.

Its subcellular location is the postsynaptic cell membrane. It localises to the cell membrane. In terms of biological role, after binding acetylcholine, the AChR responds by an extensive change in conformation that affects all subunits and leads to opening of an ion-conducting channel across the plasma membrane. This Schistocerca gregaria (Desert locust) protein is Acetylcholine receptor subunit alpha-L1.